We begin with the raw amino-acid sequence, 179 residues long: Protein Syd (179 aa).

It belongs to the Syd family.

It is found in the cell inner membrane. Its function is as follows. Interacts with the SecY protein in vivo. May bind preferentially to an uncomplexed state of SecY, thus functioning either as a chelating agent for excess SecY in the cell or as a regulatory factor that negatively controls the translocase function. The polypeptide is Protein Syd (Pseudoalteromonas translucida (strain TAC 125)).